The primary structure comprises 123 residues: Plasminogen (123 aa).

The 79-residue stretch at 40-118 (DCYHGNGQSY…RWEFCNLKKC (79 aa)) folds into the Kringle domain. 3 cysteine pairs are disulfide-bonded: Cys-41-Cys-118, Cys-62-Cys-101, and Cys-90-Cys-113.

This sequence belongs to the peptidase S1 family. Plasminogen subfamily. Interacts with CSPG4 and AMOT. Interacts (via the Kringle domains) with HRG; the interaction tethers PLG to the cell surface and enhances its activation. Interacts (via Kringle 4 domain) with ADA; the interaction stimulates PLG activation when in complex with DPP4. Angiostatin: Interacts with ATP5F1A; the interaction inhibits most of the angiogenic effects of angiostatin.

The protein resides in the secreted. It carries out the reaction Preferential cleavage: Lys-|-Xaa &gt; Arg-|-Xaa, higher selectivity than trypsin. Converts fibrin into soluble products.. Its activity is regulated as follows. Converted into plasmin by plasminogen activators, both plasminogen and its activator being bound to fibrin. Cannot be activated with streptokinase. Plasmin dissolves the fibrin of blood clots and acts as a proteolytic factor in a variety of other processes including embryonic development, tissue remodeling, tumor invasion, and inflammation. In ovulation, weakens the walls of the Graafian follicle. It activates the urokinase-type plasminogen activator, collagenases and several complement zymogens, such as C1, C4 and C5. Cleavage of fibronectin and laminin leads to cell detachment and apoptosis. Also cleaves fibrin, thrombospondin and von Willebrand factor. Its role in tissue remodeling and tumor invasion may be modulated by CSPG4. Binds to cells. The polypeptide is Plasminogen (PLG) (Capra hircus (Goat)).